The primary structure comprises 340 residues: UDP-N-acetylglucosamine--N-acetylmuramyl-(pentapeptide) pyrophosphoryl-undecaprenol N-acetylglucosamine transferase (340 aa).

Residues 10 to 12 (TGG), N124, S179, and Q277 each bind UDP-N-acetyl-alpha-D-glucosamine.

It belongs to the glycosyltransferase 28 family. MurG subfamily.

It is found in the cell inner membrane. It catalyses the reaction di-trans,octa-cis-undecaprenyl diphospho-N-acetyl-alpha-D-muramoyl-L-alanyl-D-glutamyl-meso-2,6-diaminopimeloyl-D-alanyl-D-alanine + UDP-N-acetyl-alpha-D-glucosamine = di-trans,octa-cis-undecaprenyl diphospho-[N-acetyl-alpha-D-glucosaminyl-(1-&gt;4)]-N-acetyl-alpha-D-muramoyl-L-alanyl-D-glutamyl-meso-2,6-diaminopimeloyl-D-alanyl-D-alanine + UDP + H(+). Its pathway is cell wall biogenesis; peptidoglycan biosynthesis. Its function is as follows. Cell wall formation. Catalyzes the transfer of a GlcNAc subunit on undecaprenyl-pyrophosphoryl-MurNAc-pentapeptide (lipid intermediate I) to form undecaprenyl-pyrophosphoryl-MurNAc-(pentapeptide)GlcNAc (lipid intermediate II). The protein is UDP-N-acetylglucosamine--N-acetylmuramyl-(pentapeptide) pyrophosphoryl-undecaprenol N-acetylglucosamine transferase of Sulfurimonas denitrificans (strain ATCC 33889 / DSM 1251) (Thiomicrospira denitrificans (strain ATCC 33889 / DSM 1251)).